The chain runs to 125 residues: Small ribosomal subunit protein eS8 (125 aa).

The tract at residues 1-20 (MLWQGESIRKVTGGRRRPAQ) is disordered.

It belongs to the eukaryotic ribosomal protein eS8 family. In terms of assembly, part of the 30S ribosomal subunit.

This Methanoregula boonei (strain DSM 21154 / JCM 14090 / 6A8) protein is Small ribosomal subunit protein eS8.